Here is a 73-residue protein sequence, read N- to C-terminus: Gastricsin (73 aa).

A propeptide spans 1–43 (SVIKVPLKKLKSIRQAMKEKGLLEEFLKTHKYDPAQRYRIGDI) (activation peptide). The Peptidase A1 domain occupies 57–73 (YFGEISIGTPPQNFLVL).

Belongs to the peptidase A1 family.

It is found in the secreted. The catalysed reaction is More restricted specificity than pepsin A, but shows preferential cleavage at Tyr-|-Xaa bonds. High activity on hemoglobin.. Hydrolyzes a variety of proteins. In Sus scrofa (Pig), this protein is Gastricsin (PGC).